Here is a 550-residue protein sequence, read N- to C-terminus: Arginine--tRNA ligase (550 aa).

Residues alanine 130 to glycine 140 carry the 'HIGH' region motif.

This sequence belongs to the class-I aminoacyl-tRNA synthetase family. As to quaternary structure, monomer.

Its subcellular location is the cytoplasm. The enzyme catalyses tRNA(Arg) + L-arginine + ATP = L-arginyl-tRNA(Arg) + AMP + diphosphate. The sequence is that of Arginine--tRNA ligase from Mycolicibacterium paratuberculosis (strain ATCC BAA-968 / K-10) (Mycobacterium paratuberculosis).